The sequence spans 213 residues: ATP phosphoribosyltransferase (213 aa).

It belongs to the ATP phosphoribosyltransferase family. Short subfamily. As to quaternary structure, heteromultimer composed of HisG and HisZ subunits.

The protein resides in the cytoplasm. It catalyses the reaction 1-(5-phospho-beta-D-ribosyl)-ATP + diphosphate = 5-phospho-alpha-D-ribose 1-diphosphate + ATP. It participates in amino-acid biosynthesis; L-histidine biosynthesis; L-histidine from 5-phospho-alpha-D-ribose 1-diphosphate: step 1/9. Functionally, catalyzes the condensation of ATP and 5-phosphoribose 1-diphosphate to form N'-(5'-phosphoribosyl)-ATP (PR-ATP). Has a crucial role in the pathway because the rate of histidine biosynthesis seems to be controlled primarily by regulation of HisG enzymatic activity. This is ATP phosphoribosyltransferase from Methylococcus capsulatus (strain ATCC 33009 / NCIMB 11132 / Bath).